A 179-amino-acid chain; its full sequence is Large ribosomal subunit protein uL5 (179 aa).

The protein belongs to the universal ribosomal protein uL5 family. In terms of assembly, part of the 50S ribosomal subunit; part of the 5S rRNA/L5/L18/L25 subcomplex. Contacts the 5S rRNA and the P site tRNA. Forms a bridge to the 30S subunit in the 70S ribosome.

Its function is as follows. This is one of the proteins that bind and probably mediate the attachment of the 5S RNA into the large ribosomal subunit, where it forms part of the central protuberance. In the 70S ribosome it contacts protein S13 of the 30S subunit (bridge B1b), connecting the 2 subunits; this bridge is implicated in subunit movement. Contacts the P site tRNA; the 5S rRNA and some of its associated proteins might help stabilize positioning of ribosome-bound tRNAs. The protein is Large ribosomal subunit protein uL5 of Delftia acidovorans (strain DSM 14801 / SPH-1).